The following is a 306-amino-acid chain: 3-methyl-2-oxobutanoate hydroxymethyltransferase (306 aa).

Positions 53 and 96 each coordinate Mg(2+). 3-methyl-2-oxobutanoate is bound by residues 53–54 (DS), Asp96, and Lys126. Glu128 is a Mg(2+) binding site. The Proton acceptor role is filled by Glu195.

This sequence belongs to the PanB family. As to quaternary structure, homodecamer; pentamer of dimers. Mg(2+) is required as a cofactor.

It localises to the cytoplasm. It carries out the reaction 3-methyl-2-oxobutanoate + (6R)-5,10-methylene-5,6,7,8-tetrahydrofolate + H2O = 2-dehydropantoate + (6S)-5,6,7,8-tetrahydrofolate. It functions in the pathway cofactor biosynthesis; (R)-pantothenate biosynthesis; (R)-pantoate from 3-methyl-2-oxobutanoate: step 1/2. Its function is as follows. Catalyzes the reversible reaction in which hydroxymethyl group from 5,10-methylenetetrahydrofolate is transferred onto alpha-ketoisovalerate to form ketopantoate. In Anaeromyxobacter dehalogenans (strain 2CP-1 / ATCC BAA-258), this protein is 3-methyl-2-oxobutanoate hydroxymethyltransferase.